The primary structure comprises 343 residues: Flagellar motor switch protein FliG (343 aa).

The short motif at 137–140 (EHPQ) is the Part of the EHPQR-motif element. The M-F-X-F motif; its intrinsic flexibility is probably coupled to flagellar rotation motif lies at 245 to 248 (MFTF).

Belongs to the FliG family.

Its subcellular location is the cell inner membrane. It is found in the bacterial flagellum basal body. Functionally, one of the proteins that forms a switch complex that is proposed to be located at the base of the basal body. This complex interacts with chemotaxis proteins (such as CheY) in addition to contacting components of the motor that determine the direction of flagellar rotation. Required for flagellum synthesis and motility. In H.pylori four flagellar switch proteins are encoded, FliG, FliM, FliN and FliY. This is Flagellar motor switch protein FliG from Helicobacter pylori (strain ATCC 700392 / 26695) (Campylobacter pylori).